A 218-amino-acid polypeptide reads, in one-letter code: Peptide methionine sulfoxide reductase MsrA (218 aa).

The active site involves Cys-57.

Belongs to the MsrA Met sulfoxide reductase family.

The catalysed reaction is L-methionyl-[protein] + [thioredoxin]-disulfide + H2O = L-methionyl-(S)-S-oxide-[protein] + [thioredoxin]-dithiol. The enzyme catalyses [thioredoxin]-disulfide + L-methionine + H2O = L-methionine (S)-S-oxide + [thioredoxin]-dithiol. In terms of biological role, has an important function as a repair enzyme for proteins that have been inactivated by oxidation. Catalyzes the reversible oxidation-reduction of methionine sulfoxide in proteins to methionine. This chain is Peptide methionine sulfoxide reductase MsrA, found in Brucella suis biovar 1 (strain 1330).